Consider the following 436-residue polypeptide: Carboxypeptidase A5 (436 aa).

The N-terminal stretch at 1–33 (MQGTPAGGTSPGPSPMDRQTLLVFSLILAAALG) is a signal peptide. Positions 34–126 (QMNFTGDQVL…EREAMAKSRR (93 aa)) are cleaved as a propeptide — activation peptide. A Peptidase M14 domain is found at 138–431 (SYHTLEEISS…MALRTIMEHT (294 aa)). Zn(2+) is bound by residues His196 and Glu199. Substrate contacts are provided by residues 196–199 (HSRE), Arg254, and 271–272 (NR). Cys265 and Cys288 form a disulfide bridge. Residue His323 coordinates Zn(2+). Substrate contacts are provided by residues 324-325 (SY) and Tyr375. Glu397 acts as the Proton donor/acceptor in catalysis.

It belongs to the peptidase M14 family. Zn(2+) is required as a cofactor.

Its subcellular location is the secreted. This chain is Carboxypeptidase A5 (CPA5), found in Macaca fascicularis (Crab-eating macaque).